The sequence spans 387 residues: Putative F-box protein At1g47800 (387 aa).

The 47-residue stretch at 8 to 54 folds into the F-box domain; it reads LQSLDHIPIDVLFEILVKLPAKSVARFLCVSKVWATMIRGEVFIRSF.

In Arabidopsis thaliana (Mouse-ear cress), this protein is Putative F-box protein At1g47800.